The primary structure comprises 988 residues: MAPPMTLQQWIIWNKMNKAHEALQNSTTVTDQQKEQIILEIQNEEVRPTRKDKIRYLLYTCCATSSRVLAWMLLVCVLLIVVLVSCFLTISRIQWNRDIQVLGPVIDWNVTQRAVYQPLQTRRIARSLRMQHPVPKYIEVNMTSIPQGVYYEPHPEPIVVTERVLGLSQVLMINSENIANNANLTQEVKKLLAEVVNEEMQSLSDVMIDFEIPLGDPRDQEQYIHRKCYQEFAHCYLVKYKTPKSWPTEGLIADQCPLPGYHAGLSYKPQSIWDYYIKVEITRPANWSSQAVYGQARLGSFYVPKGIRQNNYSHVLFCSDQLYSKWYNIENSIEQNEKFLLNKLDNLTTGSSLLKKRALPKEWSSQGKNALFKEINVLDVCSKPELVILLNTSYYSFSLWEGDCNFTKNMISQLVPECEGFYNNSKWMHMHPYACRFWRSKNEKEETKCRPGEKEKCLYYPYQDSLESTYDFGFLAYQKNFPAPICIEQQEIRDKDYEVYSLYQECKLASKVHGIDTVLFSLKNFLNHTGRPVNEMPNARAFVGLVDPKFPPSYPNVTREHYTSCNNRKRRSTDNNYAKLKSMGYALTGAVQTLSQISDINDENLQQGIYLLRDHVITLMEATLHDISVMEGMFAVQHLHTHLNHLKTMLLERRIDWTYMSSAWLQQQLQKSDDEMKVIKRIAKSLVYYVKQTYNSPTATAWEIGLYYELTIPKHVYLNNWNVVNIGHLVQSAGQLTHVTIAHPYEIINKECTETKYLHLKDCRRQDYVICDVVEIVQPCGNSTDTSDCPVWAEAVKEPFVQVNPLKNGSYLVLASSTDCQIPPYVPSIVTVNETTSCYGLNFKKPLVAEERLGFEPRLPNLQLRLPHLVGIIAKIKGLKIEVTSSGESIKDQIERAKAELLRLDIHEGDTPAWIQQLAAATKDVWPAAASALQGIGNFLSGAAHGIFGTAFSLLGYLKPILIGVGVILLIILIFKIVSWIPTKKKSQ.

An involved in virion budding region spans residues 1-15 (MAPPMTLQQWIIWNK). Over 1–65 (MAPPMTLQQW…YLLYTCCATS (65 aa)) the chain is Cytoplasmic. Residues K15, K18, K34, and K53 each participate in a glycyl lysine isopeptide (Lys-Gly) (interchain with G-Cter in ubiquitin) cross-link. The helical; Signal-anchor for type III membrane protein transmembrane segment at 66–88 (SRVLAWMLLVCVLLIVVLVSCFL) threads the bilayer. Residues 89-960 (TISRIQWNRD…AFSLLGYLKP (872 aa)) are Lumenal-facing. N-linked (GlcNAc...) asparagine; by host glycans are attached at residues N109, N141, N183, N286, N311, N346, N391, N405, N423, N527, and N556. A fusion peptide region spans residues 576–598 (NYAKLKSMGYALTGAVQTLSQIS). N-linked (GlcNAc...) asparagine; by host glycosylation is found at N782, N808, and N833. Residues 961-981 (ILIGVGVILLIILIFKIVSWI) traverse the membrane as a helical segment. At 982–988 (PTKKKSQ) the chain is on the cytoplasmic side. Residues 984–986 (KKK) carry the Endoplasmic reticulum retention signal motif.

The mature envelope protein consists of a trimer of SU-TM heterodimers. The N-terminus of leader peptide specifically interacts with Gag protein. This specific interaction between Gag protein and Env glycoprotein may allow particle egress. Post-translationally, envelope glycoproteins are synthesized as an inactive precursor that is processed by host furin or a furin-like proprotein convertase (PC)-mediated cleavage proteolysis to yield a functional heterooligomeric complex. Further proteolytically processed through regulated intramembrane proteolysis either by SPPL2A and SPPL2B or by SPPL3 in a PC-mediated cleavage-dependent or -independent manner, respectively. The transmembrane protein and the surface protein are N-glycosylated. In terms of processing, mono- and polyubiquitinated leader peptide are found in viral particles. Ubiquitination may be involved in regulating the balance between viral and subviral particles release.

Its subcellular location is the host endoplasmic reticulum membrane. The protein localises to the virion membrane. Functionally, the surface protein (SU) attaches the virus to the host cell by binding to the cell receptor. This interaction triggers the refolding of transmembrane protein (TM) and is thought to activate its fusogenic potential by unmasking its fusion peptide. The transmembrane protein (TM) acts as a class I viral fusion protein. Under the current model, the protein has at least 3 conformational states: pre-fusion native state, pre-hairpin intermediate state, and post-fusion hairpin state. During viral and target cell membrane fusion, the coiled coil regions (heptad repeats) assume a trimer-of-hairpins structure, positioning the fusion peptide in close proximity to the C-terminal region of the ectodomain. The formation of this structure appears to drive apposition and subsequent fusion of viral and target cell membranes. Membranes fusion leads to delivery of the nucleocapsid into the cytoplasm. Its function is as follows. The leader peptide is a component of released, infectious virions and is required for particle budding. This Pan troglodytes (Chimpanzee) protein is Envelope glycoprotein gp130 (env).